Here is a 158-residue protein sequence, read N- to C-terminus: Phosphopantetheine adenylyltransferase (158 aa).

T10 is a binding site for substrate. ATP-binding positions include 10–11 (TF) and H18. 3 residues coordinate substrate: K42, L74, and R88. ATP is bound by residues 89-91 (GLR), E99, and 124-130 (NSFISST).

This sequence belongs to the bacterial CoaD family. As to quaternary structure, homohexamer. It depends on Mg(2+) as a cofactor.

The protein localises to the cytoplasm. It catalyses the reaction (R)-4'-phosphopantetheine + ATP + H(+) = 3'-dephospho-CoA + diphosphate. It participates in cofactor biosynthesis; coenzyme A biosynthesis; CoA from (R)-pantothenate: step 4/5. Functionally, reversibly transfers an adenylyl group from ATP to 4'-phosphopantetheine, yielding dephospho-CoA (dPCoA) and pyrophosphate. This is Phosphopantetheine adenylyltransferase from Shewanella woodyi (strain ATCC 51908 / MS32).